The following is a 314-amino-acid chain: DNA-directed RNA polymerase subunit alpha (314 aa).

Residues 1-228 (MIEIEKPKIE…EHLNIFVGLT (228 aa)) are alpha N-terminal domain (alpha-NTD). Residues 245–314 (KEKVLEMTIE…ELGLGLRKDD (70 aa)) are alpha C-terminal domain (alpha-CTD).

This sequence belongs to the RNA polymerase alpha chain family. As to quaternary structure, homodimer. The RNAP catalytic core consists of 2 alpha, 1 beta, 1 beta' and 1 omega subunit. When a sigma factor is associated with the core the holoenzyme is formed, which can initiate transcription.

It carries out the reaction RNA(n) + a ribonucleoside 5'-triphosphate = RNA(n+1) + diphosphate. DNA-dependent RNA polymerase catalyzes the transcription of DNA into RNA using the four ribonucleoside triphosphates as substrates. In Bacillus thuringiensis (strain Al Hakam), this protein is DNA-directed RNA polymerase subunit alpha.